Here is a 729-residue protein sequence, read N- to C-terminus: Fatty acid oxidation complex subunit alpha (729 aa).

The tract at residues 1 to 189 (MLYQSETLQL…KVGLVDAVVA (189 aa)) is enoyl-CoA hydratase/isomerase. Asp296 lines the substrate pocket. The 3-hydroxyacyl-CoA dehydrogenase stretch occupies residues 311–729 (SAPKQAAVLG…LLDVSISQPA (419 aa)). Residues Met324, Asp343, 400-402 (VVE), Lys407, and Ser429 each bind NAD(+). Residue His450 is the For 3-hydroxyacyl-CoA dehydrogenase activity of the active site. An NAD(+)-binding site is contributed by Asn453. Substrate-binding residues include Asn500 and Tyr660.

This sequence in the N-terminal section; belongs to the enoyl-CoA hydratase/isomerase family. The protein in the C-terminal section; belongs to the 3-hydroxyacyl-CoA dehydrogenase family. As to quaternary structure, heterotetramer of two alpha chains (FadB) and two beta chains (FadA).

It catalyses the reaction a (3S)-3-hydroxyacyl-CoA + NAD(+) = a 3-oxoacyl-CoA + NADH + H(+). The catalysed reaction is a (3S)-3-hydroxyacyl-CoA = a (2E)-enoyl-CoA + H2O. It carries out the reaction a 4-saturated-(3S)-3-hydroxyacyl-CoA = a (3E)-enoyl-CoA + H2O. The enzyme catalyses (3S)-3-hydroxybutanoyl-CoA = (3R)-3-hydroxybutanoyl-CoA. It catalyses the reaction a (3Z)-enoyl-CoA = a 4-saturated (2E)-enoyl-CoA. The catalysed reaction is a (3E)-enoyl-CoA = a 4-saturated (2E)-enoyl-CoA. Its pathway is lipid metabolism; fatty acid beta-oxidation. Involved in the aerobic and anaerobic degradation of long-chain fatty acids via beta-oxidation cycle. Catalyzes the formation of 3-oxoacyl-CoA from enoyl-CoA via L-3-hydroxyacyl-CoA. It can also use D-3-hydroxyacyl-CoA and cis-3-enoyl-CoA as substrate. The chain is Fatty acid oxidation complex subunit alpha from Yersinia enterocolitica serotype O:8 / biotype 1B (strain NCTC 13174 / 8081).